A 445-amino-acid chain; its full sequence is Tubulin beta-1 chain (445 aa).

8 residues coordinate GTP: Gln-11, Glu-69, Ser-138, Gly-142, Thr-143, Gly-144, Asn-204, and Asn-226. Mg(2+) is bound at residue Glu-69. Residues 422–445 (QYQDAGMDDEYGEEYEDEAPAEEE) are disordered. The span at 427–445 (GMDDEYGEEYEDEAPAEEE) shows a compositional bias: acidic residues.

Belongs to the tubulin family. In terms of assembly, dimer of alpha and beta chains. A typical microtubule is a hollow water-filled tube with an outer diameter of 25 nm and an inner diameter of 15 nM. Alpha-beta heterodimers associate head-to-tail to form protofilaments running lengthwise along the microtubule wall with the beta-tubulin subunit facing the microtubule plus end conferring a structural polarity. Microtubules usually have 13 protofilaments but different protofilament numbers can be found in some organisms and specialized cells. Requires Mg(2+) as cofactor.

The protein resides in the cytoplasm. Its subcellular location is the cytoskeleton. Tubulin is the major constituent of microtubules, a cylinder consisting of laterally associated linear protofilaments composed of alpha- and beta-tubulin heterodimers. Microtubules grow by the addition of GTP-tubulin dimers to the microtubule end, where a stabilizing cap forms. Below the cap, tubulin dimers are in GDP-bound state, owing to GTPase activity of alpha-tubulin. This chain is Tubulin beta-1 chain (TUB1), found in Colletotrichum graminicola (Maize anthracnose fungus).